A 235-amino-acid chain; its full sequence is Ribonuclease S-2 (235 aa).

The N-terminal stretch at 1 to 31 (MATVQKSQHSHFFLLVGCIVHLSNFCSTTTA) is a signal peptide. Gln-41 is an RNA binding site. A disulfide bridge connects residues Cys-47 and Cys-54. His-66 lines the RNA pocket. Residue His-66 is the Proton donor of the active site. Asn-72 is a glycosylation site (N-linked (GlcNAc...) asparagine). Cystine bridges form between Cys-80–Cys-129, Cys-189–Cys-217, and Cys-200–Cys-211. RNA contacts are provided by residues 105–106 (DL), Arg-108, and Phe-118. Gln-122 is an active-site residue. 125 to 126 (KH) is a binding site for RNA. His-126 functions as the Proton acceptor in the catalytic mechanism.

It belongs to the RNase T2 family.

It is found in the secreted. It localises to the extracellular space. It carries out the reaction a ribonucleotidyl-ribonucleotide-RNA + H2O = a 3'-end 3'-phospho-ribonucleotide-RNA + a 5'-end dephospho-ribonucleoside-RNA + H(+). Functionally, self-incompatibility (SI) is the inherited ability of a flowering plant to prevent self-fertilization by discriminating between self and non-self pollen during pollination. In many species, self-incompatibility is controlled by the single, multiallelic locus S. In Antirrhinum hispanicum (Snapdragon), this protein is Ribonuclease S-2 (S2).